A 389-amino-acid chain; its full sequence is Aspartate aminotransferase (389 aa).

2 residues coordinate L-aspartate: Gly34 and Asn171. The residue at position 233 (Lys233) is an N6-(pyridoxal phosphate)lysine. Arg362 lines the L-aspartate pocket.

This sequence belongs to the class-I pyridoxal-phosphate-dependent aminotransferase family. In terms of assembly, homodimer. The cofactor is pyridoxal 5'-phosphate.

It is found in the cytoplasm. The catalysed reaction is L-aspartate + 2-oxoglutarate = oxaloacetate + L-glutamate. The chain is Aspartate aminotransferase (aspC) from Pyrococcus abyssi (strain GE5 / Orsay).